Consider the following 363-residue polypeptide: S-adenosylmethionine:tRNA ribosyltransferase-isomerase (363 aa).

The protein belongs to the QueA family. As to quaternary structure, monomer.

The protein localises to the cytoplasm. It carries out the reaction 7-aminomethyl-7-carbaguanosine(34) in tRNA + S-adenosyl-L-methionine = epoxyqueuosine(34) in tRNA + adenine + L-methionine + 2 H(+). It functions in the pathway tRNA modification; tRNA-queuosine biosynthesis. Its function is as follows. Transfers and isomerizes the ribose moiety from AdoMet to the 7-aminomethyl group of 7-deazaguanine (preQ1-tRNA) to give epoxyqueuosine (oQ-tRNA). In Mannheimia succiniciproducens (strain KCTC 0769BP / MBEL55E), this protein is S-adenosylmethionine:tRNA ribosyltransferase-isomerase.